We begin with the raw amino-acid sequence, 337 residues long: Holliday junction branch migration complex subunit RuvB (337 aa).

Residues 4–184 (ADRLIQPQVL…FGIPLRLEFY (181 aa)) are large ATPase domain (RuvB-L). ATP is bound by residues arginine 24, glycine 65, lysine 68, threonine 69, threonine 70, 131–133 (EDY), arginine 174, tyrosine 184, and arginine 221. Threonine 69 serves as a coordination point for Mg(2+). The tract at residues 185–255 (NVKDLCTIVT…VAQQALDMLD (71 aa)) is small ATPAse domain (RuvB-S). Positions 258–337 (QEGFDYLDRK…FNIITPDVPK (80 aa)) are head domain (RuvB-H). DNA is bound by residues arginine 294, arginine 313, and arginine 318.

Belongs to the RuvB family. Homohexamer. Forms an RuvA(8)-RuvB(12)-Holliday junction (HJ) complex. HJ DNA is sandwiched between 2 RuvA tetramers; dsDNA enters through RuvA and exits via RuvB. An RuvB hexamer assembles on each DNA strand where it exits the tetramer. Each RuvB hexamer is contacted by two RuvA subunits (via domain III) on 2 adjacent RuvB subunits; this complex drives branch migration. In the full resolvosome a probable DNA-RuvA(4)-RuvB(12)-RuvC(2) complex forms which resolves the HJ.

It is found in the cytoplasm. It catalyses the reaction ATP + H2O = ADP + phosphate + H(+). The RuvA-RuvB-RuvC complex processes Holliday junction (HJ) DNA during genetic recombination and DNA repair, while the RuvA-RuvB complex plays an important role in the rescue of blocked DNA replication forks via replication fork reversal (RFR). RuvA specifically binds to HJ cruciform DNA, conferring on it an open structure. The RuvB hexamer acts as an ATP-dependent pump, pulling dsDNA into and through the RuvAB complex. RuvB forms 2 homohexamers on either side of HJ DNA bound by 1 or 2 RuvA tetramers; 4 subunits per hexamer contact DNA at a time. Coordinated motions by a converter formed by DNA-disengaged RuvB subunits stimulates ATP hydrolysis and nucleotide exchange. Immobilization of the converter enables RuvB to convert the ATP-contained energy into a lever motion, pulling 2 nucleotides of DNA out of the RuvA tetramer per ATP hydrolyzed, thus driving DNA branch migration. The RuvB motors rotate together with the DNA substrate, which together with the progressing nucleotide cycle form the mechanistic basis for DNA recombination by continuous HJ branch migration. Branch migration allows RuvC to scan DNA until it finds its consensus sequence, where it cleaves and resolves cruciform DNA. The sequence is that of Holliday junction branch migration complex subunit RuvB from Shewanella denitrificans (strain OS217 / ATCC BAA-1090 / DSM 15013).